The following is a 295-amino-acid chain: Alpha-soluble NSF attachment protein (295 aa).

The residue at position 1 (methionine 1) is an N-acetylmethionine. Phosphoserine is present on residues serine 26, serine 29, and serine 195.

Belongs to the SNAP family. Interacts with PRKCABP, and disrupts the interaction between GRIA2 and PRKCABP, leading to the internalization of GRIA2. Found in a complex with VAMP8. Component of a SNARE-like complex that contains at least ZW10, USE1L, RINT1, STX18 and NAPA/SNAP-alpha. Interacts with VTI1A. Interacts with STX12. Interacts with GNA12 (via N-terminus); the interaction promotes CDH5 localization to plasma membrane.

It localises to the cell membrane. Functionally, required for vesicular transport between the endoplasmic reticulum and the Golgi apparatus. Together with GNA12 promotes CDH5 localization to plasma membrane. In Mus musculus (Mouse), this protein is Alpha-soluble NSF attachment protein (Napa).